Consider the following 96-residue polypeptide: MRDPRDIIKRPVITERSMEMMAEKKYTFDVDVKSNKTEVKDALEAIFGVKVEKVNIMNYKPKAKRVGRHAGFTSRRRKAIVKLTADSKEIEIFQGV.

Belongs to the universal ribosomal protein uL23 family. As to quaternary structure, part of the 50S ribosomal subunit. Contacts protein L29, and trigger factor when it is bound to the ribosome.

In terms of biological role, one of the early assembly proteins it binds 23S rRNA. One of the proteins that surrounds the polypeptide exit tunnel on the outside of the ribosome. Forms the main docking site for trigger factor binding to the ribosome. The chain is Large ribosomal subunit protein uL23 from Bacillus cereus (strain ATCC 10987 / NRS 248).